A 438-amino-acid chain; its full sequence is Enolase (438 aa).

Position 174 (Q174) interacts with (2R)-2-phosphoglycerate. The Proton donor role is filled by E216. Mg(2+) contacts are provided by D253, E297, and D324. (2R)-2-phosphoglycerate is bound by residues K349, R378, S379, and K400. The active-site Proton acceptor is the K349.

The protein belongs to the enolase family. In terms of assembly, component of the RNA degradosome, a multiprotein complex involved in RNA processing and mRNA degradation. It depends on Mg(2+) as a cofactor.

The protein localises to the cytoplasm. It localises to the secreted. It is found in the cell surface. It catalyses the reaction (2R)-2-phosphoglycerate = phosphoenolpyruvate + H2O. It functions in the pathway carbohydrate degradation; glycolysis; pyruvate from D-glyceraldehyde 3-phosphate: step 4/5. In terms of biological role, catalyzes the reversible conversion of 2-phosphoglycerate (2-PG) into phosphoenolpyruvate (PEP). It is essential for the degradation of carbohydrates via glycolysis. The sequence is that of Enolase from Psychrobacter sp. (strain PRwf-1).